The following is a 216-amino-acid chain: Ornithine decarboxylase antizyme 1 (216 aa).

It belongs to the ODC antizyme family. Interacts with ODC1 and thereby sterically blocks ODC homodimerization.

Functionally, ornithine decarboxylase (ODC) antizyme protein that negatively regulates ODC activity and intracellular polyamine biosynthesis and uptake in response to increased intracellular polyamine levels. Binds to ODC monomers, inhibiting the assembly of the functional ODC homodimer, and targets the monomers for ubiquitin-independent proteolytic destruction by the 26S proteasome. In Xenopus laevis (African clawed frog), this protein is Ornithine decarboxylase antizyme 1 (oaz1).